Reading from the N-terminus, the 458-residue chain is ATP synthase subunit beta (458 aa).

148–155 (GGAGVGKT) is an ATP binding site.

It belongs to the ATPase alpha/beta chains family. F-type ATPases have 2 components, CF(1) - the catalytic core - and CF(0) - the membrane proton channel. CF(1) has five subunits: alpha(3), beta(3), gamma(1), delta(1), epsilon(1). CF(0) has three main subunits: a(1), b(2) and c(9-12). The alpha and beta chains form an alternating ring which encloses part of the gamma chain. CF(1) is attached to CF(0) by a central stalk formed by the gamma and epsilon chains, while a peripheral stalk is formed by the delta and b chains.

It is found in the cell inner membrane. The enzyme catalyses ATP + H2O + 4 H(+)(in) = ADP + phosphate + 5 H(+)(out). Its function is as follows. Produces ATP from ADP in the presence of a proton gradient across the membrane. The catalytic sites are hosted primarily by the beta subunits. This chain is ATP synthase subunit beta, found in Francisella tularensis subsp. novicida (strain U112).